The following is a 450-amino-acid chain: Dol-P-Glc:Glc(2)Man(9)GlcNAc(2)-PP-Dol alpha-1,2-glucosyltransferase (450 aa).

Residues 12-32 (ISIISKYVAIVIFLIFVIIMF) form a helical membrane-spanning segment. N34 is a glycosylation site (N-linked (GlcNAc...) asparagine). Transmembrane regions (helical) follow at residues 158 to 178 (YFLF…LGLI), 190 to 210 (ALVG…IAFI), 243 to 263 (LLGY…NGGI), and 273 to 293 (IELH…FTIP). N297 carries N-linked (GlcNAc...) asparagine glycosylation. Transmembrane regions (helical) follow at residues 312–332 (IILN…FTIV), 357–377 (LKPL…SSLI), 384–404 (FIGI…SPLF), and 429–449 (FIWL…KGII).

It belongs to the ALG10 glucosyltransferase family.

The protein localises to the endoplasmic reticulum membrane. The catalysed reaction is an alpha-D-Glc-(1-&gt;3)-alpha-D-Glc-(1-&gt;3)-alpha-D-Man-(1-&gt;2)-alpha-D-Man-(1-&gt;2)-alpha-D-Man-(1-&gt;3)-[alpha-D-Man-(1-&gt;2)-alpha-D-Man-(1-&gt;3)-[alpha-D-Man-(1-&gt;2)-alpha-D-Man-(1-&gt;6)]-alpha-D-Man-(1-&gt;6)]-beta-D-Man-(1-&gt;4)-beta-D-GlcNAc-(1-&gt;4)-alpha-D-GlcNAc-diphospho-di-trans,poly-cis-dolichol + a di-trans,poly-cis-dolichyl beta-D-glucosyl phosphate = a alpha-D-Glc-(1-&gt;2)-alpha-D-Glc-(1-&gt;3)-alpha-D-Glc-(1-&gt;3)-alpha-D-Man-(1-&gt;2)-alpha-D-Man-(1-&gt;2)-alpha-D-Man-(1-&gt;3)-[alpha-D-Man-(1-&gt;2)-alpha-D-Man-(1-&gt;3)-[alpha-D-Man-(1-&gt;2)-alpha-D-Man-(1-&gt;6)]-alpha-D-Man-(1-&gt;6)]-beta-D-Man-(1-&gt;4)-beta-D-GlcNAc-(1-&gt;4)-alpha-D-GlcNAc-diphospho-di-trans,poly-cis-dolichol + a di-trans,poly-cis-dolichyl phosphate + H(+). It functions in the pathway protein modification; protein glycosylation. Functionally, dol-P-Glc:Glc(2)Man(9)GlcNAc(2)-PP-Dol alpha-1,2-glucosyltransferase that operates in the biosynthetic pathway of dolichol-linked oligosaccharides, the glycan precursors employed in protein asparagine (N)-glycosylation. The assembly of dolichol-linked oligosaccharides begins on the cytosolic side of the endoplasmic reticulum membrane and finishes in its lumen. The sequential addition of sugars to dolichol pyrophosphate produces dolichol-linked oligosaccharides containing fourteen sugars, including two GlcNAcs, nine mannoses and three glucoses. Once assembled, the oligosaccharide is transferred from the lipid to nascent proteins by oligosaccharyltransferases. In the lumen of the endoplasmic reticulum, adds the third and last glucose residue from dolichyl phosphate glucose (Dol-P-Glc) onto the lipid-linked oligosaccharide intermediate Glc(2)Man(9)GlcNAc(2)-PP-Dol to produce Glc(3)Man(9)GlcNAc(2)-PP-Dol. In Candida albicans (strain SC5314 / ATCC MYA-2876) (Yeast), this protein is Dol-P-Glc:Glc(2)Man(9)GlcNAc(2)-PP-Dol alpha-1,2-glucosyltransferase (DIE2).